The chain runs to 490 residues: Capsid protein (490 aa).

The tract at residues 79-143 is disordered; it reads GETSEEESDS…TQPKTIPGQK (65 aa). Acidic residues predominate over residues 81–94; it reads TSEEESDSGEEPEF. A compositionally biased stretch (basic and acidic residues) spans 95-111; the sequence is EQVRMDRTGGTEIPKEE. Residues 122-125 carry the Nuclear localization signal motif; sequence RKRK. A CCHC-type zinc finger spans residues 411-428; sequence CRCWICNIEGHYANECPN. A disordered region spans residues 464 to 490; that stretch reads YKEEEEETSTEEDDGSSTSEDSDSESD. Acidic residues predominate over residues 465–490; sequence KEEEEETSTEEDDGSSTSEDSDSESD.

Belongs to the caulimoviridae capsid protein family. Interacts (via nuclear localization signal) with host importin alpha.

The protein resides in the virion. Its subcellular location is the host nucleus. Its function is as follows. Self assembles to form an icosahedral capsid, about 50 nm in diameter, nm, composed of 420 subunits of the viral capsid protein. The capsid encapsulates the genomic dsDNA. Following virus entry into host cell, provides nuclear import of the viral genome. Virus particles do not enter the nucleus, but dock at the nuclear membrane through the interaction with host importins. The polypeptide is Capsid protein (Arabidopsis thaliana (Mouse-ear cress)).